The sequence spans 177 residues: Large ribosomal subunit protein uL6 (177 aa).

It belongs to the universal ribosomal protein uL6 family. As to quaternary structure, part of the 50S ribosomal subunit.

Its function is as follows. This protein binds to the 23S rRNA, and is important in its secondary structure. It is located near the subunit interface in the base of the L7/L12 stalk, and near the tRNA binding site of the peptidyltransferase center. The protein is Large ribosomal subunit protein uL6 of Edwardsiella ictaluri (strain 93-146).